A 217-amino-acid chain; its full sequence is 3,4-dihydroxy-2-butanone 4-phosphate synthase (217 aa).

D-ribulose 5-phosphate-binding positions include 37–38 (RE), D42, 150–154 (RGGHT), and E174. Position 38 (E38) interacts with Mg(2+). H153 contacts Mg(2+).

It belongs to the DHBP synthase family. As to quaternary structure, homodimer. Mg(2+) serves as cofactor. The cofactor is Mn(2+).

The enzyme catalyses D-ribulose 5-phosphate = (2S)-2-hydroxy-3-oxobutyl phosphate + formate + H(+). It functions in the pathway cofactor biosynthesis; riboflavin biosynthesis; 2-hydroxy-3-oxobutyl phosphate from D-ribulose 5-phosphate: step 1/1. Its function is as follows. Catalyzes the conversion of D-ribulose 5-phosphate to formate and 3,4-dihydroxy-2-butanone 4-phosphate. This chain is 3,4-dihydroxy-2-butanone 4-phosphate synthase, found in Klebsiella pneumoniae (strain 342).